A 326-amino-acid chain; its full sequence is Neuferricin homolog (326 aa).

An N-terminal signal peptide occupies residues 1–34 (MEKNRRKKDDAGVMTKTLAGVAALTFLVSFICSS). The Cytochrome b5 heme-binding domain occupies 98–197 (KHVFTPEQLH…KEYPLVGVVA (100 aa)).

Belongs to the cytochrome b5 family. MAPR subfamily.

It is found in the secreted. Functionally, heme-binding protein. The sequence is that of Neuferricin homolog from Caenorhabditis briggsae.